Consider the following 208-residue polypeptide: 3-demethoxyubiquinol 3-hydroxylase (208 aa).

The Fe cation site is built by E57, E87, H90, E139, E171, and H174.

It belongs to the COQ7 family. Fe cation is required as a cofactor.

Its subcellular location is the cell membrane. The catalysed reaction is a 5-methoxy-2-methyl-3-(all-trans-polyprenyl)benzene-1,4-diol + AH2 + O2 = a 3-demethylubiquinol + A + H2O. Its pathway is cofactor biosynthesis; ubiquinone biosynthesis. Its function is as follows. Catalyzes the hydroxylation of 2-nonaprenyl-3-methyl-6-methoxy-1,4-benzoquinol during ubiquinone biosynthesis. This is 3-demethoxyubiquinol 3-hydroxylase from Herbaspirillum seropedicae.